A 702-amino-acid polypeptide reads, in one-letter code: Phosphoglycerol transferase I (702 aa).

The next 3 membrane-spanning stretches (helical) occupy residues 2–22 (HWILALSLLLLLWLLVASPRL), 71–91 (FSGYIAVFIGMVLLSLSPLML), and 103–123 (GGAVFGAFVVMLLVSMAVSPV).

The protein belongs to the OpgB family.

It is found in the cell inner membrane. The catalysed reaction is a phosphatidylglycerol + a membrane-derived-oligosaccharide D-glucose = a 1,2-diacyl-sn-glycerol + a membrane-derived-oligosaccharide 6-(glycerophospho)-D-glucose.. Its pathway is glycan metabolism; osmoregulated periplasmic glucan (OPG) biosynthesis. In terms of biological role, transfers a phosphoglycerol residue from phosphatidylglycerol to the membrane-bound nascent glucan backbones. The sequence is that of Phosphoglycerol transferase I from Xanthomonas campestris pv. campestris (strain B100).